The chain runs to 500 residues: Glycerol kinase (500 aa).

T13 provides a ligand contact to ADP. ATP-binding residues include T13, T14, and S15. T13 contacts sn-glycerol 3-phosphate. R17 is an ADP binding site. Sn-glycerol 3-phosphate contacts are provided by R83, E84, Y135, and D244. Glycerol-binding residues include R83, E84, Y135, D244, and Q245. ADP-binding residues include T266, G309, G410, and N414. ATP-binding residues include T266, G309, and G410.

This sequence belongs to the FGGY kinase family.

The enzyme catalyses glycerol + ATP = sn-glycerol 3-phosphate + ADP + H(+). Its pathway is polyol metabolism; glycerol degradation via glycerol kinase pathway; sn-glycerol 3-phosphate from glycerol: step 1/1. Inhibited by fructose 1,6-bisphosphate (FBP). In terms of biological role, key enzyme in the regulation of glycerol uptake and metabolism. Catalyzes the phosphorylation of glycerol to yield sn-glycerol 3-phosphate. The chain is Glycerol kinase from Chromobacterium violaceum (strain ATCC 12472 / DSM 30191 / JCM 1249 / CCUG 213 / NBRC 12614 / NCIMB 9131 / NCTC 9757 / MK).